Here is a 301-residue protein sequence, read N- to C-terminus: Quinolinate synthase (301 aa).

Iminosuccinate contacts are provided by histidine 21 and serine 38. Cysteine 83 provides a ligand contact to [4Fe-4S] cluster. Residues 109-111 (YIN) and serine 126 each bind iminosuccinate. Position 169 (cysteine 169) interacts with [4Fe-4S] cluster. Iminosuccinate is bound by residues 195–197 (HPE) and threonine 212. [4Fe-4S] cluster is bound at residue cysteine 257.

This sequence belongs to the quinolinate synthase family. Type 2 subfamily. Requires [4Fe-4S] cluster as cofactor.

Its subcellular location is the cytoplasm. The enzyme catalyses iminosuccinate + dihydroxyacetone phosphate = quinolinate + phosphate + 2 H2O + H(+). The protein operates within cofactor biosynthesis; NAD(+) biosynthesis; quinolinate from iminoaspartate: step 1/1. Catalyzes the condensation of iminoaspartate with dihydroxyacetone phosphate to form quinolinate. The sequence is that of Quinolinate synthase from Clostridium perfringens (strain ATCC 13124 / DSM 756 / JCM 1290 / NCIMB 6125 / NCTC 8237 / Type A).